The following is a 558-amino-acid chain: Phosphatidylserine lipase ABHD16A (558 aa).

A run of 2 helical transmembrane segments spans residues 60-80 (ILAL…FAFF) and 93-113 (VVPF…VACL). Residues 114–558 (RGIGRWTNPQ…AQNFQMPWHL (445 aa)) are Cytoplasmic-facing. The region spanning 281–407 (LVICCEGNAG…LVTRTVRQHL (127 aa)) is the AB hydrolase-1 domain. Catalysis depends on charge relay system residues serine 355, aspartate 430, and histidine 507.

The protein belongs to the AB hydrolase superfamily. ABHD16 family.

The protein localises to the membrane. It catalyses the reaction 1-heptadecanoyl-2-(5Z,8Z,11Z,14Z-eicosatetraenoyl)-sn-glycero-3-phosphoserine + H2O = 1-heptadecanoyl-sn-glycero-3-phosphoserine + (5Z,8Z,11Z,14Z)-eicosatetraenoate + H(+). The catalysed reaction is 1-hexadecanoyl-2-(9Z-octadecenoyl)-sn-glycero-3-phospho-L-serine + H2O = 1-hexadecanoyl-sn-glycero-3-phospho-L-serine + (9Z)-octadecenoate + H(+). The enzyme catalyses 1-octadecanoyl-2-(9Z,12Z-octadecadienoyl)-sn-glycero-3-phosphoserine + H2O = 1-octadecanoyl-sn-glycero-3-phosphoserine + (9Z,12Z)-octadecadienoate + H(+). It carries out the reaction 1-heptadecanoyl-2-(5Z,8Z,11Z,14Z-eicosatetraenoyl)-sn-glycero-3-phosphocholine + H2O = 1-heptadecanoyl-sn-glycero-3-phosphocholine + (5Z,8Z,11Z,14Z)-eicosatetraenoate + H(+). It catalyses the reaction 1-hexadecanoyl-2-(9Z-octadecenoyl)-sn-glycero-3-phosphoglycerol + H2O = 1-hexadecanoyl-sn-glycero-3-phosphoglycerol + (9Z)-octadecenoate + H(+). The catalysed reaction is 1-hexadecanoyl-2-(9Z-octadecenoyl)-sn-glycero-3-phospho-(1D-myo-inositol) + H2O = 1-hexadecanoyl-sn-glycero-3-phospho-(1D-myo-inositol) + (9Z)-octadecenoate + H(+). The enzyme catalyses 1-heptadecanoyl-2-(5Z,8Z,11Z,14Z-eicosatetraenoyl)-sn-glycero-3-phosphoethanolamine + H2O = 1-heptadecanoyl-sn-glycero-3-phosphoethanolamine + (5Z,8Z,11Z,14Z)-eicosatetraenoate + H(+). It carries out the reaction 1-hexadecanoyl-2-(9Z-octadecenoyl)-sn-glycero-3-phospho-(1'-sn-glycerol) + H2O = 1-hexadecanoyl-sn-glycero-3-phospho-(1'-sn-glycerol) + (9Z)-octadecenoate + H(+). It catalyses the reaction Hydrolyzes glycerol monoesters of long-chain fatty acids.. The catalysed reaction is 1-tetradecanoylglycerol + H2O = tetradecanoate + glycerol + H(+). The enzyme catalyses 2-hexadecanoylglycerol + H2O = glycerol + hexadecanoate + H(+). It carries out the reaction 1-(9Z-octadecenoyl)-glycerol + H2O = glycerol + (9Z)-octadecenoate + H(+). It catalyses the reaction 2-(9Z-octadecenoyl)-glycerol + H2O = glycerol + (9Z)-octadecenoate + H(+). The catalysed reaction is 2-(9Z,12Z-octadecadienoyl)-glycerol + H2O = (9Z,12Z)-octadecadienoate + glycerol + H(+). The enzyme catalyses 1-(5Z,8Z,11Z,14Z-eicosatetraenoyl)-glycerol + H2O = glycerol + (5Z,8Z,11Z,14Z)-eicosatetraenoate + H(+). It carries out the reaction 2-(5Z,8Z,11Z,14Z-eicosatetraenoyl)-glycerol + H2O = glycerol + (5Z,8Z,11Z,14Z)-eicosatetraenoate + H(+). It catalyses the reaction prostaglandin D2-1-glycerol ester + H2O = prostaglandin D2 + glycerol + H(+). The catalysed reaction is 2-glyceryl-15-deoxy-Delta(12,14)-prostaglandin J2 + H2O = 15-deoxy-Delta(12,14)-prostaglandin J2 + glycerol + H(+). The enzyme catalyses 1-(9Z,12Z-octadecadienoyl)-glycerol + H2O = (9Z,12Z)-octadecadienoate + glycerol + H(+). Phosphatidylserine (PS) lipase that mediates the hydrolysis of phosphatidylserine to generate lysophosphatidylserine (LPS). LPS constitutes a class of signaling lipids that regulates immunological and neurological processes. Has no activity towards diacylglycerol, triacylglycerol or lysophosphatidylserine lipase. Also has monoacylglycerol lipase activity, with preference for 1-(9Z,12Z-octadecadienoyl)-glycerol (1-LG) and 2-glyceryl-15-deoxy-Delta(12,14)-prostaglandin J2 (15d-PGJ(2)-G). This is Phosphatidylserine lipase ABHD16A from Macaca fascicularis (Crab-eating macaque).